Reading from the N-terminus, the 448-residue chain is Signal recognition particle protein (448 aa).

GTP contacts are provided by residues 101-108 (GLQGSGKT), 182-186 (DSAGR), and 240-243 (SKFD).

Belongs to the GTP-binding SRP family. SRP54 subfamily. In terms of assembly, part of the signal recognition particle protein translocation system, which is composed of SRP and FtsY. SRP is a ribonucleoprotein composed of Ffh and a 4.5S RNA molecule.

It is found in the cytoplasm. The catalysed reaction is GTP + H2O = GDP + phosphate + H(+). In terms of biological role, involved in targeting and insertion of nascent membrane proteins into the cytoplasmic membrane. Binds to the hydrophobic signal sequence of the ribosome-nascent chain (RNC) as it emerges from the ribosomes. The SRP-RNC complex is then targeted to the cytoplasmic membrane where it interacts with the SRP receptor FtsY. Interaction with FtsY leads to the transfer of the RNC complex to the Sec translocase for insertion into the membrane, the hydrolysis of GTP by both Ffh and FtsY, and the dissociation of the SRP-FtsY complex into the individual components. The polypeptide is Signal recognition particle protein (Helicobacter pylori (strain J99 / ATCC 700824) (Campylobacter pylori J99)).